A 187-amino-acid chain; its full sequence is Dihydrofolate reductase (187 aa).

In terms of domain architecture, DHFR spans 4 to 185; the sequence is PLNCIVAVSQ…IKYKFEVYEK (182 aa). NADP(+) is bound by residues Ala-10 and 16–22; that span reads GIGKNGD. 31–36 contacts substrate; that stretch reads EFKYFQ. At Lys-33 the chain carries N6-acetyllysine; alternate. An N6-succinyllysine; alternate modification is found at Lys-33. Residue 55 to 57 coordinates NADP(+); that stretch reads RKT. Asn-65 and Arg-71 together coordinate substrate. Residues 77–79 and 117–124 each bind NADP(+); these read SRE and GGSSVYQE.

The protein belongs to the dihydrofolate reductase family. As to quaternary structure, homodimer.

It is found in the mitochondrion. It localises to the cytoplasm. It catalyses the reaction (6S)-5,6,7,8-tetrahydrofolate + NADP(+) = 7,8-dihydrofolate + NADPH + H(+). The protein operates within cofactor biosynthesis; tetrahydrofolate biosynthesis; 5,6,7,8-tetrahydrofolate from 7,8-dihydrofolate: step 1/1. Its function is as follows. Key enzyme in folate metabolism. Contributes to the de novo mitochondrial thymidylate biosynthesis pathway. Catalyzes an essential reaction for de novo glycine and purine synthesis, and for DNA precursor synthesis. Binds its own mRNA. The chain is Dihydrofolate reductase (Dhfr) from Mus musculus (Mouse).